We begin with the raw amino-acid sequence, 211 residues long: Flagellar calcium-binding protein (211 aa).

The interval 1–29 (MGACGSKGSTSDKGLASDKDGKKAKDRKE) is disordered. Positions 15–29 (LASDKDGKKAKDRKE) are enriched in basic and acidic residues. EF-hand domains lie at 45-80 (EAKQ…VLKL), 81-116 (DEFT…FVEF), 127-162 (YDFF…LEAW), and 164-199 (AKVE…VKLD). Residues aspartate 58, asparagine 60, threonine 62, lysine 64, and glutamate 69 each contribute to the Ca(2+) site. Aspartate 140, serine 142, asparagine 144, glutamate 151, aspartate 177, asparagine 179, threonine 181, serine 183, and glutamate 188 together coordinate Ca(2+).

It belongs to the calflagin family.

It is found in the cell projection. The protein resides in the cilium. Its subcellular location is the flagellum. In terms of biological role, may contribute to the rapid motility of the trypanosomes, playing a role either in flagellar structure or in calcium metabolism. Could alternate between a GDP-bound inactive form to a calcium/GTP-bound active form. The polypeptide is Flagellar calcium-binding protein (FCABP) (Trypanosoma cruzi).